The primary structure comprises 206 residues: Large ribosomal subunit protein uL4 (206 aa).

The tract at residues 45 to 85 is disordered; it reads QGNRAQKDREQVKHTTKKPWRQKGTGRARAGMSSSPLWRGG. Basic residues predominate over residues 58–70; it reads HTTKKPWRQKGTG.

It belongs to the universal ribosomal protein uL4 family. As to quaternary structure, part of the 50S ribosomal subunit.

Functionally, one of the primary rRNA binding proteins, this protein initially binds near the 5'-end of the 23S rRNA. It is important during the early stages of 50S assembly. It makes multiple contacts with different domains of the 23S rRNA in the assembled 50S subunit and ribosome. Forms part of the polypeptide exit tunnel. The sequence is that of Large ribosomal subunit protein uL4 from Burkholderia mallei (strain NCTC 10247).